A 109-amino-acid chain; its full sequence is Elicitor peptide 2 (109 aa).

The propeptide occupies 1–73 (MEKLDKRREE…KDDDVVVLLR (73 aa)). The span at 74-88 (DNKAKSKKRDKEKPS) shows a compositional bias: basic and acidic residues. Residues 74–109 (DNKAKSKKRDKEKPSSGRPGQTNSVPNAAIQVYKED) form a disordered region.

It belongs to the brassicaceae elicitor peptide family.

Elicitor of plant defense. In Arabidopsis thaliana (Mouse-ear cress), this protein is Elicitor peptide 2 (PEP2).